We begin with the raw amino-acid sequence, 215 residues long: Vesicle-trafficking protein SEC22b (215 aa).

The Cytoplasmic segment spans residues Met-1–Ala-194. Positions Met-6 to Ile-119 constitute a Longin domain. Lys-38 carries the post-translational modification N6-acetyllysine. Residues Asn-134–Ala-194 enclose the v-SNARE coiled-coil homology domain. The residue at position 137 (Ser-137) is a Phosphoserine. A Phosphothreonine modification is found at Thr-140. Ser-164, Ser-168, Ser-174, and Ser-177 each carry phosphoserine. The chain crosses the membrane as a helical; Anchor for type IV membrane protein span at residues Lys-195–Leu-215.

It belongs to the synaptobrevin family. In terms of assembly, interacts with STX17. Component of two distinct SNARE complexes consisting of STX5, GOSR2/BOS1, BET1 and SEC22B or STX18, USE1L, BNIP1/SEC20L and SEC22B. YKT6 can probably replace SEC22B as subunit of either complex. Interacts with the COPII Sec23/24 complex composed of SEC23A and SEC24A; recruits SEC22B into COPII-coated vesicles to allow its transport from the endoplasmic reticulum to the Golgi. Interacts with BET1.

The protein resides in the endoplasmic reticulum membrane. The protein localises to the endoplasmic reticulum-Golgi intermediate compartment membrane. Its subcellular location is the golgi apparatus. It localises to the cis-Golgi network membrane. It is found in the trans-Golgi network membrane. The protein resides in the melanosome. SNARE involved in targeting and fusion of ER-derived transport vesicles with the Golgi complex as well as Golgi-derived retrograde transport vesicles with the ER. The protein is Vesicle-trafficking protein SEC22b (Sec22b) of Cricetulus griseus (Chinese hamster).